The sequence spans 206 residues: 3-demethoxyubiquinol 3-hydroxylase (206 aa).

Fe cation is bound by residues E55, E85, H88, E137, E169, and H172.

The protein belongs to the COQ7 family. Requires Fe cation as cofactor.

It is found in the cell membrane. It carries out the reaction a 5-methoxy-2-methyl-3-(all-trans-polyprenyl)benzene-1,4-diol + AH2 + O2 = a 3-demethylubiquinol + A + H2O. It functions in the pathway cofactor biosynthesis; ubiquinone biosynthesis. Catalyzes the hydroxylation of 2-nonaprenyl-3-methyl-6-methoxy-1,4-benzoquinol during ubiquinone biosynthesis. This chain is 3-demethoxyubiquinol 3-hydroxylase, found in Aromatoleum aromaticum (strain DSM 19018 / LMG 30748 / EbN1) (Azoarcus sp. (strain EbN1)).